We begin with the raw amino-acid sequence, 522 residues long: Ribonuclease Y (522 aa).

A helical transmembrane segment spans residues 7–27; that stretch reads STILYCLFFFFLGIAAVLAFI. Positions 212-272 constitute a KH domain; that stretch reads TTSTVGVPTD…VRREVARMSL (61 aa). Positions 338-431 constitute an HD domain; that stretch reads VLRHSVEVAF…VATADACSAS (94 aa).

Belongs to the RNase Y family.

The protein localises to the cell membrane. Its function is as follows. Endoribonuclease that initiates mRNA decay. This chain is Ribonuclease Y, found in Rhodopirellula baltica (strain DSM 10527 / NCIMB 13988 / SH1).